The chain runs to 307 residues: Porphobilinogen deaminase (307 aa).

An S-(dipyrrolylmethanemethyl)cysteine modification is found at C239.

It belongs to the HMBS family. Monomer. Dipyrromethane is required as a cofactor.

The enzyme catalyses 4 porphobilinogen + H2O = hydroxymethylbilane + 4 NH4(+). Its pathway is porphyrin-containing compound metabolism; protoporphyrin-IX biosynthesis; coproporphyrinogen-III from 5-aminolevulinate: step 2/4. Tetrapolymerization of the monopyrrole PBG into the hydroxymethylbilane pre-uroporphyrinogen in several discrete steps. This Campylobacter jejuni subsp. doylei (strain ATCC BAA-1458 / RM4099 / 269.97) protein is Porphobilinogen deaminase.